A 478-amino-acid polypeptide reads, in one-letter code: Proline--tRNA ligase (478 aa).

It belongs to the class-II aminoacyl-tRNA synthetase family. ProS type 3 subfamily. Homodimer.

The protein resides in the cytoplasm. The catalysed reaction is tRNA(Pro) + L-proline + ATP = L-prolyl-tRNA(Pro) + AMP + diphosphate. Functionally, catalyzes the attachment of proline to tRNA(Pro) in a two-step reaction: proline is first activated by ATP to form Pro-AMP and then transferred to the acceptor end of tRNA(Pro). In Clostridium botulinum (strain Okra / Type B1), this protein is Proline--tRNA ligase.